We begin with the raw amino-acid sequence, 774 residues long: Ion-translocating oxidoreductase complex subunit C (774 aa).

4Fe-4S ferredoxin-type domains lie at 359–389 and 399–428; these read ELPE…QQLH and QLLA…VQYY. Residues cysteine 369, cysteine 372, cysteine 375, cysteine 379, cysteine 408, cysteine 411, cysteine 414, and cysteine 418 each coordinate [4Fe-4S] cluster. The span at 453–490 shows a compositional bias: basic and acidic residues; sequence EQRQARLRRDEERRAAERAQRAEKAALARAAQAEREEA. The disordered stretch occupies residues 453–493; the sequence is EQRQARLRRDEERRAAERAQRAEKAALARAAQAEREEAAPA.

Belongs to the 4Fe4S bacterial-type ferredoxin family. RnfC subfamily. The complex is composed of six subunits: RnfA, RnfB, RnfC, RnfD, RnfE and RnfG. [4Fe-4S] cluster is required as a cofactor.

Its subcellular location is the cell inner membrane. Functionally, part of a membrane-bound complex that couples electron transfer with translocation of ions across the membrane. The sequence is that of Ion-translocating oxidoreductase complex subunit C from Pseudomonas aeruginosa (strain ATCC 15692 / DSM 22644 / CIP 104116 / JCM 14847 / LMG 12228 / 1C / PRS 101 / PAO1).